The primary structure comprises 361 residues: S-adenosylmethionine:tRNA ribosyltransferase-isomerase (361 aa).

Belongs to the QueA family. Monomer.

The protein localises to the cytoplasm. The enzyme catalyses 7-aminomethyl-7-carbaguanosine(34) in tRNA + S-adenosyl-L-methionine = epoxyqueuosine(34) in tRNA + adenine + L-methionine + 2 H(+). It functions in the pathway tRNA modification; tRNA-queuosine biosynthesis. In terms of biological role, transfers and isomerizes the ribose moiety from AdoMet to the 7-aminomethyl group of 7-deazaguanine (preQ1-tRNA) to give epoxyqueuosine (oQ-tRNA). This is S-adenosylmethionine:tRNA ribosyltransferase-isomerase from Mesorhizobium japonicum (strain LMG 29417 / CECT 9101 / MAFF 303099) (Mesorhizobium loti (strain MAFF 303099)).